The primary structure comprises 267 residues: WWNFGSLLGICLMTQILTGLLLAAHYTADTTLAFSSVAHTCRDVQYGWLIRNLHANGASFFFICIYLHIGRGLYYGSYLYKETWNTGVILLLTLMATAFVGYVLPWGQMSFWGATVITNLFSAIPYIGQTIVEWAWGGFSVDNPTLTRFFTLHFLLPFMIAGLTIIHLTFLHESGSNNPLGISSNCDKIPFHPYFSLKDILGFTLMFLPLMTLALFAPNLLGDPENFTPANPLVTPPHIKPEWYFLFAYAILRSIPNKLGGVLALAA.

The next 4 membrane-spanning stretches (helical) occupy residues 4–24 (FGSLLGICLMTQILTGLLLAA), 48–69 (WLIRNLHANGASFFFICIYLHI), 84–104 (WNTGVILLLTLMATAFVGYVL), and 149–169 (FFTLHFLLPFMIAGLTIIHLT). 2 residues coordinate heme b: His-54 and His-68. Heme b contacts are provided by His-153 and His-167. His-172 serves as a coordination point for a ubiquinone. The next 2 helical transmembrane spans lie at 197–217 (LKDILGFTLMFLPLMTLALFA) and 259–267 (LGGVLALAA).

The protein belongs to the cytochrome b family. As to quaternary structure, the cytochrome bc1 complex contains 11 subunits: 3 respiratory subunits (MT-CYB, CYC1 and UQCRFS1), 2 core proteins (UQCRC1 and UQCRC2) and 6 low-molecular weight proteins (UQCRH/QCR6, UQCRB/QCR7, UQCRQ/QCR8, UQCR10/QCR9, UQCR11/QCR10 and a cleavage product of UQCRFS1). This cytochrome bc1 complex then forms a dimer. Heme b is required as a cofactor.

Its subcellular location is the mitochondrion inner membrane. In terms of biological role, component of the ubiquinol-cytochrome c reductase complex (complex III or cytochrome b-c1 complex) that is part of the mitochondrial respiratory chain. The b-c1 complex mediates electron transfer from ubiquinol to cytochrome c. Contributes to the generation of a proton gradient across the mitochondrial membrane that is then used for ATP synthesis. In Raphus cucullatus (Dodo), this protein is Cytochrome b (MT-CYB).